The chain runs to 305 residues: MTQRRAMLILHGKQSLNEDVRDAVADKRKQGWELDVRLTWEAGDAQRLVNEALAAGHRHIVAGGGDGTLRDIAEALALAATKASLTILPLGTANDFARAAGVPLDVSKALQLMDVAPRAVDLGEVGGKLFLNMATGGFGSQVTANTSEDLKKVLGGAAYLFTGLTRFSELHAAHGELTGPDFHWRGDLLALGIGNGRQAGGGHELCPTALADDGLLDISILPAPQEVVGTLRSLLEGGLGIDNMFIRARLPWVELKSAQGLDINLDGEPLSGEDLRFVARPGALQVHLPANSPVLGSTPLLNRPD.

The DAGKc domain occupies 1-129 (MTQRRAMLIL…VDLGEVGGKL (129 aa)). Residues Thr39, 65 to 71 (GDGTLRD), and Thr92 each bind ATP. Residues Leu210, Asp213, and Leu215 each contribute to the Mg(2+) site. The Proton acceptor role is filled by Glu268.

This sequence belongs to the diacylglycerol/lipid kinase family. YegS lipid kinase subfamily. Mg(2+) is required as a cofactor. Requires Ca(2+) as cofactor.

It is found in the cytoplasm. Probably phosphorylates lipids; the in vivo substrate is unknown. The protein is Probable lipid kinase YegS-like of Pseudomonas syringae pv. tomato (strain ATCC BAA-871 / DC3000).